The primary structure comprises 327 residues: GTPase Obg (327 aa).

The Obg domain occupies Asn-3 to Leu-160. An OBG-type G domain is found at Ala-161 to Ser-327. GTP-binding positions include Gly-167–Ser-174, Phe-192–Asn-196, Asp-214–Gly-217, Ser-281–Asp-284, and Ser-308–Phe-310. Mg(2+) contacts are provided by Ser-174 and Thr-194.

Belongs to the TRAFAC class OBG-HflX-like GTPase superfamily. OBG GTPase family. As to quaternary structure, monomer. Mg(2+) serves as cofactor.

The protein resides in the cytoplasm. In terms of biological role, an essential GTPase which binds GTP, GDP and possibly (p)ppGpp with moderate affinity, with high nucleotide exchange rates and a fairly low GTP hydrolysis rate. Plays a role in control of the cell cycle, stress response, ribosome biogenesis and in those bacteria that undergo differentiation, in morphogenesis control. The polypeptide is GTPase Obg (Karelsulcia muelleri (strain GWSS) (Sulcia muelleri)).